The following is a 1393-amino-acid chain: DNA-directed RNA polymerase subunit beta' (1393 aa).

Residues Cys-70, Cys-72, Cys-85, and Cys-88 each contribute to the Zn(2+) site. Mg(2+) contacts are provided by Asp-461, Asp-463, and Asp-465. Positions 815, 889, 896, and 899 each coordinate Zn(2+).

The protein belongs to the RNA polymerase beta' chain family. The RNAP catalytic core consists of 2 alpha, 1 beta, 1 beta' and 1 omega subunit. When a sigma factor is associated with the core the holoenzyme is formed, which can initiate transcription. Mg(2+) is required as a cofactor. The cofactor is Zn(2+).

The enzyme catalyses RNA(n) + a ribonucleoside 5'-triphosphate = RNA(n+1) + diphosphate. DNA-dependent RNA polymerase catalyzes the transcription of DNA into RNA using the four ribonucleoside triphosphates as substrates. This chain is DNA-directed RNA polymerase subunit beta', found in Vesicomyosocius okutanii subsp. Calyptogena okutanii (strain HA).